We begin with the raw amino-acid sequence, 333 residues long: Flotillin-like protein FloA (333 aa).

Residues 10 to 30 form a helical membrane-spanning segment; the sequence is IFLIAGGIIFLVLFFHYVPFF.

It belongs to the flotillin-like FloA family. In terms of assembly, homooligomerizes.

It localises to the cell membrane. Its subcellular location is the membrane raft. Its function is as follows. Found in functional membrane microdomains (FMM) that may be equivalent to eukaryotic membrane rafts. FMMs are highly dynamic and increase in number as cells age. Flotillins are thought to be important factors in membrane fluidity. This Bacteroides fragilis (strain ATCC 25285 / DSM 2151 / CCUG 4856 / JCM 11019 / LMG 10263 / NCTC 9343 / Onslow / VPI 2553 / EN-2) protein is Flotillin-like protein FloA.